Here is a 401-residue protein sequence, read N- to C-terminus: UPF0242 protein CPn_0755/CP_1117/CPj0755/CpB0783 (401 aa).

Belongs to the UPF0242 family.

This is UPF0242 protein CPn_0755/CP_1117/CPj0755/CpB0783 from Chlamydia pneumoniae (Chlamydophila pneumoniae).